We begin with the raw amino-acid sequence, 169 residues long: Large ribosomal subunit protein uL10 (169 aa).

This sequence belongs to the universal ribosomal protein uL10 family. In terms of assembly, part of the ribosomal stalk of the 50S ribosomal subunit. The N-terminus interacts with L11 and the large rRNA to form the base of the stalk. The C-terminus forms an elongated spine to which L12 dimers bind in a sequential fashion forming a multimeric L10(L12)X complex.

Forms part of the ribosomal stalk, playing a central role in the interaction of the ribosome with GTP-bound translation factors. This is Large ribosomal subunit protein uL10 from Onion yellows phytoplasma (strain OY-M).